The chain runs to 365 residues: Alternative oxidase 2, mitochondrial (365 aa).

The segment covering 32 to 46 (TPPHSTTTTSPSSPA) has biased composition (low complexity). Positions 32–52 (TPPHSTTTTSPSSPAFHQPNH) are disordered. Residues Glu-166, Glu-205, and His-208 each contribute to the Fe cation site. The helical transmembrane segment at 220–242 (WFTRSIIYVGQGVFTNVFFLLYL) threads the bilayer. Glu-256, Glu-257, Glu-312, and His-315 together coordinate Fe cation. The interval 345-365 (QPNHGINVMRPTGWEKQDLQL) is disordered.

This sequence belongs to the alternative oxidase family. It depends on Fe cation as a cofactor.

The protein localises to the mitochondrion inner membrane. Catalyzes cyanide-resistant oxygen consumption. May increase respiration when the cytochrome respiratory pathway is restricted, or in response to low temperatures. This chain is Alternative oxidase 2, mitochondrial (AOX2), found in Candida albicans (Yeast).